The following is a 331-amino-acid chain: Lipoyl synthase (331 aa).

[4Fe-4S] cluster contacts are provided by C74, C79, C85, C100, C104, C107, and S314. Residues 85–303 (CFGKGTATFM…ETEAYKMGFT (219 aa)) form the Radical SAM core domain.

It belongs to the radical SAM superfamily. Lipoyl synthase family. Requires [4Fe-4S] cluster as cofactor.

It is found in the cytoplasm. It carries out the reaction [[Fe-S] cluster scaffold protein carrying a second [4Fe-4S](2+) cluster] + N(6)-octanoyl-L-lysyl-[protein] + 2 oxidized [2Fe-2S]-[ferredoxin] + 2 S-adenosyl-L-methionine + 4 H(+) = [[Fe-S] cluster scaffold protein] + N(6)-[(R)-dihydrolipoyl]-L-lysyl-[protein] + 4 Fe(3+) + 2 hydrogen sulfide + 2 5'-deoxyadenosine + 2 L-methionine + 2 reduced [2Fe-2S]-[ferredoxin]. Its pathway is protein modification; protein lipoylation via endogenous pathway; protein N(6)-(lipoyl)lysine from octanoyl-[acyl-carrier-protein]: step 2/2. Its function is as follows. Catalyzes the radical-mediated insertion of two sulfur atoms into the C-6 and C-8 positions of the octanoyl moiety bound to the lipoyl domains of lipoate-dependent enzymes, thereby converting the octanoylated domains into lipoylated derivatives. This Leptothrix cholodnii (strain ATCC 51168 / LMG 8142 / SP-6) (Leptothrix discophora (strain SP-6)) protein is Lipoyl synthase.